A 430-amino-acid polypeptide reads, in one-letter code: Type 3 secretion system ATPase (430 aa).

Glycine 162–phenylalanine 167 contributes to the ATP binding site.

It belongs to the ATPase alpha/beta chains family. T3SS ATPase subfamily. In terms of assembly, the core secretion machinery of the T3SS is composed of approximately 20 different proteins, including cytoplasmic components, a base, an export apparatus and a needle. This subunit is part of the cytosolic complex. Forms homohexamers. Interacts directly with MxiN/SctL (stator protein) and Spa13/SctO (stalk protein). Can form a soluble complex with Spa33/SctQ, MxiN/SctL and MxiK/SctK.

The protein localises to the cytoplasm. It carries out the reaction ATP + H2O + cellular proteinSide 1 = ADP + phosphate + cellular proteinSide 2.. Oligomerization increases ATPase activity. Monomeric forms exhibit low-level ATPase activity by forming short-lived oligomers with active site contributions from at least two protomers. In contrast, oligomers exhibit enhanced ATP hydrolysis rates that likely result from multiple preformed active sites within the oligomeric complex. Oligomerization is important for both enzyme activation and T3SS function. Activity is regulated by MxiN/SctL, which differentially regulates the activity of the monomer and the oligomer: it up-regulates the ATPase activity of the monomer, while it down-regulates the activity of the oligomer. ATPase component of the type III secretion system (T3SS), also called injectisome, which is used to inject bacterial effector proteins into eukaryotic host cells. Acts as a molecular motor to provide the energy that is required for the export of proteins. Required for type III secretion apparatus (T3SA) formation, proper protein secretion, host cell invasion and virulence. May play a critical role in T3SS substrate recognition, disassembly of the effector/chaperone complex and unfolding of the effector in an ATP-dependent manner prior to secretion. The polypeptide is Type 3 secretion system ATPase (Shigella flexneri).